Consider the following 369-residue polypeptide: Glutamate 5-kinase (369 aa).

Lys9 is an ATP binding site. Residues Ser49, Asp136, and Asn148 each coordinate substrate. ATP contacts are provided by residues Thr168–Asp169 and Thr210–Lys216. Residues Gln275–Trp355 form the PUA domain.

Belongs to the glutamate 5-kinase family.

It is found in the cytoplasm. It catalyses the reaction L-glutamate + ATP = L-glutamyl 5-phosphate + ADP. Its pathway is amino-acid biosynthesis; L-proline biosynthesis; L-glutamate 5-semialdehyde from L-glutamate: step 1/2. Functionally, catalyzes the transfer of a phosphate group to glutamate to form L-glutamate 5-phosphate. The polypeptide is Glutamate 5-kinase (Streptococcus pneumoniae (strain ATCC 700669 / Spain 23F-1)).